The sequence spans 741 residues: MASNGAYPVLGPGVTVNPGTSLSVFTALPFATPSPGPTHRPPLVTAVVPPAGPLVLSAFPSTPLVAGQDGRGPSGAGASNVFVQMRTEVGPVKPPQAQTLILTQAPLVWQAPGTLCGGVMCPPPLLLAAAPGVPVTSAQVVGGTQACEGGWSHGLPLPPPPPAAQVAPIVSPGNAGPWPQGAHGEGSLAPSQAKARPDDSCKPKSVYENFRLWQHYKPLARRHLPQSPDTEALSCFLIPVLRSLARRKPTMTLEEGLWRAMREWQHTSNFDRMIFYEMAAKFLEFEAEEEMQIQKSQWMKGPQSLPPPAPPRLEPRGPPAPEVVKQPVYLPSKDGPKAPTACLPPPRPQRPAETKAHLPPPRPPRPAETKVPEEIPPEVVQEYVDIMEELLGSHPGDTGEPEGQREKGKVEQPQEEDGMTSDPGLLSYIDKLCSQEDFVTKVEAVIHPRFLEELLSPDPQMDFLALSQELEQEEGLTLAQLVEKRLLSLKEKGCGRAAPRHGTARLDSSPSEFAAGQEAAREVPDPQQRVSVETSPPQTAAQDPQGQGRVRTGMARSEDPAVLLGCQDSPRLKAVRPTSPPQDHRPTCPGLGTKDALGLPGESPVKESHGLAKGSSEETELPGMVYVVGSHHRLRPWRLSQSPVPSSGLLSPGGRGPQGALQSPSAQKRGLSPSPSPASKSKKRPLFGSPSPAEKTPHPGPGLRVSGEQSLAWGLGGPSQSQKRKGDPLASRRKKKRHCSQ.

Disordered regions lie at residues 172–200 (PGNA…PDDS), 293–375 (IQKS…PEEI), 391–424 (LGSH…SDPG), 496–624 (RAAP…LPGM), and 638–741 (RLSQ…HCSQ). Pro residues predominate over residues 304-321 (SLPPPAPPRLEPRGPPAP). The span at 402–412 (EGQREKGKVEQ) shows a compositional bias: basic and acidic residues. The segment covering 528–545 (QRVSVETSPPQTAAQDPQ) has biased composition (polar residues). Over residues 639–650 (LSQSPVPSSGLL) the composition is skewed to low complexity. Positions 731–741 (SRRKKKRHCSQ) are enriched in basic residues.

It belongs to the NUT family.

The protein is NUT family member 2G (NUTM2G) of Homo sapiens (Human).